Here is a 482-residue protein sequence, read N- to C-terminus: MIVNQALIELTKQVAVAVEEIKFSPNSTSNNSTPTNNKLKSSSSSISNCDSPSSKSKSNSSTSTPTSQPQTPSQLPQQAQQQAQQQHYSANSMNPYYAQQVLLQLQKPSTFVKHVHVVVKNTPFGITLRSKEPLQFNFQNYVIKATLLYDSDPPKMVDFIHNEPLQYVATVSEDGSEVCVDVKVGILSSQHQGSMFLVVLHISHCSAPTPSNSEPISTILTNIGNNSIHSLNVTNICVVSHPIRIVSKLDHVKKEGIPILKKRTFHEILTDKLKKLQKSQDSQSKWIKNLYQQHGAQYDMEPYNSTLHSQKTDSLCSSSTSTPSFNSTSSSSKNQSQSIKNEEEEDGGEDEEEEGGEDNDNESESSNTNSTQLIGKKSINKLPISTTTSSSNFNNLMVNNNINNNNNNNNNNHLIQNTTFSSTSHFQNSFNRVVEVYNLIPEYERVEVIRKMVQQLKSYDLEQLVSTFIDELKCGYESTIIS.

2 stretches are compositionally biased toward low complexity: residues 24–86 (SPNS…AQQQ) and 312–339 (TDSLCSSSTSTPSFNSTSSSSKNQSQSI). 2 disordered regions span residues 24-88 (SPNS…QQHY) and 307-376 (LHSQ…LIGK). The segment covering 342–363 (EEEEDGGEDEEEEGGEDNDNES) has biased composition (acidic residues).

This is an uncharacterized protein from Dictyostelium discoideum (Social amoeba).